Consider the following 267-residue polypeptide: Phosphatidylglycerol--prolipoprotein diacylglyceryl transferase (267 aa).

7 helical membrane passes run 17 to 37 (LNIRWYGLMYILGFVAAWLLA), 56 to 76 (LVTYSVFGVILGGRLGYTLFY), 91 to 111 (IWNGGMSFHGGLLGVIIAIWL), 120 to 140 (LFEVGDFTAPLVAPGLLAGRL), 173 to 193 (QLYEAALEGVALFIILWLFSA), 199 to 219 (MAVSGMFLLLYGSFRFFVEFF), and 236 to 256 (MGQILCLPMILGGLVLVGFAM). Arg139 contacts a 1,2-diacyl-sn-glycero-3-phospho-(1'-sn-glycerol).

Belongs to the Lgt family.

It is found in the cell inner membrane. It catalyses the reaction L-cysteinyl-[prolipoprotein] + a 1,2-diacyl-sn-glycero-3-phospho-(1'-sn-glycerol) = an S-1,2-diacyl-sn-glyceryl-L-cysteinyl-[prolipoprotein] + sn-glycerol 1-phosphate + H(+). It functions in the pathway protein modification; lipoprotein biosynthesis (diacylglyceryl transfer). Functionally, catalyzes the transfer of the diacylglyceryl group from phosphatidylglycerol to the sulfhydryl group of the N-terminal cysteine of a prolipoprotein, the first step in the formation of mature lipoproteins. The sequence is that of Phosphatidylglycerol--prolipoprotein diacylglyceryl transferase from Oleidesulfovibrio alaskensis (strain ATCC BAA-1058 / DSM 17464 / G20) (Desulfovibrio alaskensis).